The sequence spans 566 residues: Cytokine-like nuclear factor N-PAC (566 aa).

The PWWP domain maps to 9-70 (VNDLVWAKMK…ETQIKPYLQF (62 aa)). 2 disordered regions span residues 127 to 147 (VASG…NTTT) and 206 to 234 (MLDD…SSLD). A dehydrogenase domain region spans residues 274–566 (RNIKASQLKF…ASAVYVRARF (293 aa)). Residues 284-298 (GFLG…IVKN) and Lys518 contribute to the NAD(+) site.

This sequence belongs to the HIBADH-related family. NP60 subfamily. As to quaternary structure, binds to mononucleosomes. Interacts with male-specific lethal (MSL) histone acetyltransferase complex at least composed of mof, msl-1, msl-2 and msl-3.

The protein localises to the chromosome. May have oxidoreductase activity. The polypeptide is Cytokine-like nuclear factor N-PAC (Anopheles gambiae (African malaria mosquito)).